The sequence spans 600 residues: Elongation factor 4 (600 aa).

The tr-type G domain occupies 4–186 (KNVRNFCIIA…AIVNRIPPPK (183 aa)). GTP-binding positions include 16-21 (DHGKST) and 133-136 (NKID).

It belongs to the TRAFAC class translation factor GTPase superfamily. Classic translation factor GTPase family. LepA subfamily.

It localises to the cell inner membrane. It carries out the reaction GTP + H2O = GDP + phosphate + H(+). Its function is as follows. Required for accurate and efficient protein synthesis under certain stress conditions. May act as a fidelity factor of the translation reaction, by catalyzing a one-codon backward translocation of tRNAs on improperly translocated ribosomes. Back-translocation proceeds from a post-translocation (POST) complex to a pre-translocation (PRE) complex, thus giving elongation factor G a second chance to translocate the tRNAs correctly. Binds to ribosomes in a GTP-dependent manner. The protein is Elongation factor 4 of Aquifex aeolicus (strain VF5).